We begin with the raw amino-acid sequence, 195 residues long: MEVILLERVAKLGQMGELVRVKDGFARNFLLPRGKALRATAANREKYEHMKADLEARNIAAKAEATKVAEKIDGQNVVVIRQASEGGQLFGSVSVRDIIASFDGQGVKIDRSQVLLDAPIKTIGKHSIQVAVHPEVEVAVSVTVARSAEEAERINRGEDISTRREDEDAAAEALAAAGEFFDPDAQFGEEQPTEE.

Belongs to the bacterial ribosomal protein bL9 family.

In terms of biological role, binds to the 23S rRNA. In Rhodopseudomonas palustris (strain TIE-1), this protein is Large ribosomal subunit protein bL9.